The chain runs to 185 residues: Ribosome-recycling factor (185 aa).

It belongs to the RRF family.

It localises to the cytoplasm. Responsible for the release of ribosomes from messenger RNA at the termination of protein biosynthesis. May increase the efficiency of translation by recycling ribosomes from one round of translation to another. The polypeptide is Ribosome-recycling factor (Pelobacter propionicus (strain DSM 2379 / NBRC 103807 / OttBd1)).